A 681-amino-acid polypeptide reads, in one-letter code: Pseudohemocyanin-2 (681 aa).

The signal sequence occupies residues 1–21 (VLLCSLVAATAAWPYFGGFQR). 4 N-linked (GlcNAc...) asparagine glycosylation sites follow: asparagine 98, asparagine 191, asparagine 228, and asparagine 624.

The protein belongs to the tyrosinase family. Hemocyanin subfamily. In terms of assembly, hexamer. As to expression, strongly expressed in ovaries. Also expressed in heart. Not detected in hepatopancreas, gills, connective tissue or muscle.

Its function is as follows. Does not function as a hemocyanin. The polypeptide is Pseudohemocyanin-2 (Homarus americanus (American lobster)).